The chain runs to 378 residues: Beta sliding clamp (378 aa).

The protein belongs to the beta sliding clamp family. In terms of assembly, forms a ring-shaped head-to-tail homodimer around DNA which binds and tethers DNA polymerases and other proteins to the DNA. The DNA replisome complex has a single clamp-loading complex (3 tau and 1 each of delta, delta', psi and chi subunits) which binds 3 Pol III cores (1 core on the leading strand and 2 on the lagging strand) each with a beta sliding clamp dimer. Additional proteins in the replisome are other copies of gamma, psi and chi, Ssb, DNA helicase and RNA primase.

Its subcellular location is the cytoplasm. In terms of biological role, confers DNA tethering and processivity to DNA polymerases and other proteins. Acts as a clamp, forming a ring around DNA (a reaction catalyzed by the clamp-loading complex) which diffuses in an ATP-independent manner freely and bidirectionally along dsDNA. Initially characterized for its ability to contact the catalytic subunit of DNA polymerase III (Pol III), a complex, multichain enzyme responsible for most of the replicative synthesis in bacteria; Pol III exhibits 3'-5' exonuclease proofreading activity. The beta chain is required for initiation of replication as well as for processivity of DNA replication. The chain is Beta sliding clamp (dnaN) from Streptococcus pneumoniae (strain ATCC BAA-255 / R6).